A 561-amino-acid polypeptide reads, in one-letter code: Sesquiterpene synthase 2 (561 aa).

Residues Asp313, Asp317, Asp458, and Glu466 each contribute to the Mg(2+) site. The DDXXD motif signature appears at 313-317 (DDIYD).

Belongs to the terpene synthase family. Tpsa subfamily. Requires Mn(2+) as cofactor. Mg(2+) serves as cofactor.

The protein resides in the cytoplasm. It carries out the reaction (2E,6E)-farnesyl diphosphate + H2O = kunzeaol + diphosphate. It functions in the pathway secondary metabolite biosynthesis; terpenoid biosynthesis. In terms of biological role, involved in the biosynthesis of kunzeaol. Produces mainly (-)-germacrene D along with gamma-cadinene. The polypeptide is Sesquiterpene synthase 2 (STS2) (Thapsia garganica (Deadly carrot)).